The sequence spans 160 residues: Large ribosomal subunit protein eL21B (160 aa).

Residues 114 to 140 (AKRKEAKAQGKTVQLRRQPAPPATAHF) form a disordered region.

It belongs to the eukaryotic ribosomal protein eL21 family. Component of the large ribosomal subunit (LSU). Mature yeast ribosomes consist of a small (40S) and a large (60S) subunit. The 40S small subunit contains 1 molecule of ribosomal RNA (18S rRNA) and at least 33 different proteins. The large 60S subunit contains 3 rRNA molecules (25S, 5.8S and 5S rRNA) and at least 46 different proteins.

The protein resides in the cytoplasm. Component of the ribosome, a large ribonucleoprotein complex responsible for the synthesis of proteins in the cell. The small ribosomal subunit (SSU) binds messenger RNAs (mRNAs) and translates the encoded message by selecting cognate aminoacyl-transfer RNA (tRNA) molecules. The large subunit (LSU) contains the ribosomal catalytic site termed the peptidyl transferase center (PTC), which catalyzes the formation of peptide bonds, thereby polymerizing the amino acids delivered by tRNAs into a polypeptide chain. The nascent polypeptides leave the ribosome through a tunnel in the LSU and interact with protein factors that function in enzymatic processing, targeting, and the membrane insertion of nascent chains at the exit of the ribosomal tunnel. The chain is Large ribosomal subunit protein eL21B (rpl2102) from Schizosaccharomyces pombe (strain 972 / ATCC 24843) (Fission yeast).